Consider the following 319-residue polypeptide: Aspartate carbamoyltransferase catalytic subunit (319 aa).

Residues R65 and T66 each coordinate carbamoyl phosphate. Position 93 (K93) interacts with L-aspartate. Positions 115, 149, and 152 each coordinate carbamoyl phosphate. Positions 182 and 237 each coordinate L-aspartate. Positions 278 and 279 each coordinate carbamoyl phosphate.

It belongs to the aspartate/ornithine carbamoyltransferase superfamily. ATCase family. In terms of assembly, heterododecamer (2C3:3R2) of six catalytic PyrB chains organized as two trimers (C3), and six regulatory PyrI chains organized as three dimers (R2).

The catalysed reaction is carbamoyl phosphate + L-aspartate = N-carbamoyl-L-aspartate + phosphate + H(+). Its pathway is pyrimidine metabolism; UMP biosynthesis via de novo pathway; (S)-dihydroorotate from bicarbonate: step 2/3. Functionally, catalyzes the condensation of carbamoyl phosphate and aspartate to form carbamoyl aspartate and inorganic phosphate, the committed step in the de novo pyrimidine nucleotide biosynthesis pathway. In Azoarcus sp. (strain BH72), this protein is Aspartate carbamoyltransferase catalytic subunit.